The chain runs to 272 residues: Ethanolamine ammonia-lyase small subunit (272 aa).

3 residues coordinate adenosylcob(III)alamin: Val-161, Glu-182, and Cys-211.

It belongs to the EutC family. The basic unit is a heterodimer which dimerizes to form tetramers. The heterotetramers trimerize; 6 large subunits form a core ring with 6 small subunits projecting outwards. Adenosylcob(III)alamin serves as cofactor.

It is found in the bacterial microcompartment. It catalyses the reaction ethanolamine = acetaldehyde + NH4(+). It functions in the pathway amine and polyamine degradation; ethanolamine degradation. Its function is as follows. Catalyzes the deamination of various vicinal amino-alcohols to oxo compounds. Allows this organism to utilize ethanolamine as the sole source of nitrogen and carbon in the presence of external vitamin B12. In Pseudomonas putida (strain ATCC 700007 / DSM 6899 / JCM 31910 / BCRC 17059 / LMG 24140 / F1), this protein is Ethanolamine ammonia-lyase small subunit.